Here is a 202-residue protein sequence, read N- to C-terminus: NADH-quinone oxidoreductase subunit C (202 aa).

The protein belongs to the complex I 30 kDa subunit family. As to quaternary structure, NDH-1 is composed of 14 different subunits. Subunits NuoB, C, D, E, F, and G constitute the peripheral sector of the complex.

The protein localises to the cell inner membrane. The catalysed reaction is a quinone + NADH + 5 H(+)(in) = a quinol + NAD(+) + 4 H(+)(out). In terms of biological role, NDH-1 shuttles electrons from NADH, via FMN and iron-sulfur (Fe-S) centers, to quinones in the respiratory chain. The immediate electron acceptor for the enzyme in this species is believed to be ubiquinone. Couples the redox reaction to proton translocation (for every two electrons transferred, four hydrogen ions are translocated across the cytoplasmic membrane), and thus conserves the redox energy in a proton gradient. The polypeptide is NADH-quinone oxidoreductase subunit C (Acidovorax sp. (strain JS42)).